Here is a 48-residue protein sequence, read N- to C-terminus: Osteocalcin (48 aa).

Positions 1–44 (AGTAPADLTVAQLESLKEVCEANLACEHMMDVSGIIAAYTAYYG) constitute a Gla domain. 4 residues coordinate Ca(2+): Glu-14, Glu-18, Glu-21, and Glu-27. Residues Glu-14, Glu-18, and Glu-21 each carry the 4-carboxyglutamate modification. Cys-20 and Cys-26 are joined by a disulfide.

The protein belongs to the osteocalcin/matrix Gla protein family. In terms of processing, gamma-carboxyglutamate residues are formed by vitamin K dependent carboxylation by GGCX. These residues are essential for the binding of calcium.

The protein localises to the secreted. Its subcellular location is the extracellular space. The protein resides in the extracellular matrix. Functionally, the carboxylated form is one of the main organic components of the bone matrix, which constitutes 1-2% of the total bone protein. The carboxylated form binds strongly to apatite and calcium. The polypeptide is Osteocalcin (bglap) (Cyprinus carpio (Common carp)).